A 503-amino-acid chain; its full sequence is Aminoaldehyde dehydrogenase 1, peroxisomal (503 aa).

Na(+) contacts are provided by Ile28, Asp99, and Leu189. 238-245 (GSTMTGSK) serves as a coordination point for NAD(+). The active-site Proton acceptor is the Glu260. NAD(+) is bound by residues Cys294 and Glu393. The Nucleophile role is filled by Cys294.

The protein belongs to the aldehyde dehydrogenase family. As to expression, expressed in leaves, flowers and fruits.

It is found in the cytoplasm. The protein resides in the cytosol. The enzyme catalyses 4-aminobutanal + NAD(+) + H2O = 4-aminobutanoate + NADH + 2 H(+). It catalyses the reaction 3-aminopropanal + NAD(+) + H2O = beta-alanine + NADH + 2 H(+). The protein operates within amine and polyamine biosynthesis; betaine biosynthesis via choline pathway; betaine from betaine aldehyde: step 1/1. Functionally, dehydrogenase that catalyzes the oxidation of several aminoaldehydes. Metabolizes and detoxifies aldehyde products of polyamine degradation to non-toxic amino acids. Catalyzes the oxidation of 4-aminobutanal and 3-aminopropanal to 4-aminobutanoate and beta-alanine, respectively. The sequence is that of Aminoaldehyde dehydrogenase 1, peroxisomal from Malus domestica (Apple).